A 538-amino-acid polypeptide reads, in one-letter code: Methyl-accepting chemotaxis protein NahY (538 aa).

The Cytoplasmic segment spans residues 1–9; that stretch reads MQQFTIRTR. Residues 10–30 traverse the membrane as a helical segment; that stretch reads LLMLVGAMFIGFITIELMGFS. Topologically, residues 31–187 are periplasmic; it reads ALQRGVASLN…AVVLYDSSRT (157 aa). The helical transmembrane segment at 188–208 threads the bilayer; that stretch reads MLALLLLGILICGGVFATRLI. The region spanning 209–261 is the HAMP domain; it reads RSIIHPLTTLKDAAARVALGDLSQSIQVSGRNEVTDVQQSVQAMQANLRNTLQ. At 209-538 the chain is on the cytoplasmic side; that stretch reads RSIIHPLTTL…LNNLVNRFSM (330 aa). The Methyl-accepting transducer domain occupies 266 to 502; it reads SAAQLAAAAE…EVDRNLVAIS (237 aa).

This sequence belongs to the methyl-accepting chemotaxis (MCP) protein family.

It localises to the cell inner membrane. In terms of biological role, chemotactic-signal transducers respond to changes in the concentration of attractants and repellents in the environment, transduce a signal from the outside to the inside of the cell, and facilitate sensory adaptation through the variation of the level of methylation. Chemoreceptor for naphthalene or a related compound. May facilitate biodegradation. This Pseudomonas putida (Arthrobacter siderocapsulatus) protein is Methyl-accepting chemotaxis protein NahY (nahY).